The following is a 363-amino-acid chain: MRVDLFDFDLPEERIALRPVEPRDHAKLLHVRPGEPFEDRHVYDLFDLLQPGDALVFNDTKVIPAQLEGMRERTGNISQVSATLHMRVGPDRWKAFLRPAKRVKEGDRIRFGHSGTSCFLGTLDATVAEKGDSGEALLVFDLSGAVLDEAIAAVGHIPLPPYIASKRPEDERDRKDYQTVYAREEGAVAAPTAGLHFTPDLLEKIKARGIEEHFVTLHVGAGTFLPVKADDTGDHKMHAEIGHVSQRTASALNAVHERGGRIICVGTTSLRLIESATGEDGVVRPWSGATDIFITPGYRFRAVDLLMTNFHLPRSTLFMLVSAFSGLDTMHAAYNYAIADGYRFYSYGDASLLERIDHDRHSA.

This sequence belongs to the QueA family. Monomer.

Its subcellular location is the cytoplasm. The enzyme catalyses 7-aminomethyl-7-carbaguanosine(34) in tRNA + S-adenosyl-L-methionine = epoxyqueuosine(34) in tRNA + adenine + L-methionine + 2 H(+). The protein operates within tRNA modification; tRNA-queuosine biosynthesis. In terms of biological role, transfers and isomerizes the ribose moiety from AdoMet to the 7-aminomethyl group of 7-deazaguanine (preQ1-tRNA) to give epoxyqueuosine (oQ-tRNA). The polypeptide is S-adenosylmethionine:tRNA ribosyltransferase-isomerase (Brucella melitensis biotype 2 (strain ATCC 23457)).